A 466-amino-acid chain; its full sequence is MSIASVASVFKGEHAVGSKVTVRGWVRTRRDSKAGISFLAVYDGSCFNPIQGVVPNSLENYDNEVLKLTAGCSVVMTGDVVESPGAGQAFELQVTELEVTGWVDDPDTYPMAAKRHSIEHLRELAHLRPRTNIIGAVARVRNCLSQAIHRFYHEEGFIWVSTPLITASDCEGAGEMFRVSTLDMENLPRTSEGKVDYDKDFFGKEAFLTVSGQLNGETYACALSKIYTFGPTFRAENSNTSRHLAEFWMVEPEVAFATLSDIAGLAEAMLKYAFNAVLTERMDDLQFFAQHVDKTVIERLQSFVSSDFAQVDYTDAVDILQKCGKTFEFPVSWGIDLSSEHERYLAEEHFKAPVVVKNYPKDIKAFYMRLNEDGKTVAAMDVLAPGIGEIIGGSQREERLDVLDMRLAEMDLNKEDYWWYRDLRRYGTVPHAGFGLGFERLVSYVTGVSNIRDVIPFPRAPRTANF.

It belongs to the class-II aminoacyl-tRNA synthetase family. In terms of assembly, homodimer.

It is found in the cytoplasm. It carries out the reaction tRNA(Asn) + L-asparagine + ATP = L-asparaginyl-tRNA(Asn) + AMP + diphosphate + H(+). The polypeptide is Asparagine--tRNA ligase (Shewanella putrefaciens (strain CN-32 / ATCC BAA-453)).